A 68-amino-acid chain; its full sequence is Sec-independent protein translocase protein TatA (68 aa).

The chain crosses the membrane as a helical span at residues 1-21; it reads MGSLSIWHWLIVLLIVVLVFG. Positions 42–68 are disordered; that stretch reads GMNEGAKDGQPPAKDAGRIIDGEADKK. The span at 56-68 shows a compositional bias: basic and acidic residues; the sequence is DAGRIIDGEADKK.

Belongs to the TatA/E family. The Tat system comprises two distinct complexes: a TatABC complex, containing multiple copies of TatA, TatB and TatC subunits, and a separate TatA complex, containing only TatA subunits. Substrates initially bind to the TatABC complex, which probably triggers association of the separate TatA complex to form the active translocon.

Its subcellular location is the cell inner membrane. Part of the twin-arginine translocation (Tat) system that transports large folded proteins containing a characteristic twin-arginine motif in their signal peptide across membranes. TatA could form the protein-conducting channel of the Tat system. The polypeptide is Sec-independent protein translocase protein TatA (Chromobacterium violaceum (strain ATCC 12472 / DSM 30191 / JCM 1249 / CCUG 213 / NBRC 12614 / NCIMB 9131 / NCTC 9757 / MK)).